The sequence spans 100 residues: Small ribosomal subunit protein uS14 (100 aa).

It belongs to the universal ribosomal protein uS14 family. As to quaternary structure, part of the 30S ribosomal subunit. Contacts proteins S3 and S10.

Functionally, binds 16S rRNA, required for the assembly of 30S particles and may also be responsible for determining the conformation of the 16S rRNA at the A site. The polypeptide is Small ribosomal subunit protein uS14 (Synechococcus sp. (strain CC9605)).